A 311-amino-acid polypeptide reads, in one-letter code: Mitochondrial FAD carrier protein FLX1 (311 aa).

Solcar repeat units lie at residues 7-101 (TPLQ…TKEL), 123-210 (MNSL…LKQR), and 224-310 (LTNL…LKHR). The next 6 helical transmembrane spans lie at 13 to 33 (VISG…LDLL), 77 to 97 (LSIN…LYGV), 129 to 149 (LSAG…IWVI), 183 to 203 (LWKG…YFAV), 230 to 250 (IEIT…FQLL), and 266 to 286 (LFPL…YKGL).

It belongs to the mitochondrial carrier (TC 2.A.29) family.

The protein localises to the mitochondrion inner membrane. In terms of biological role, transport of FAD from the cytosol to the mitochondrial matrix. This Saccharomyces cerevisiae (strain ATCC 204508 / S288c) (Baker's yeast) protein is Mitochondrial FAD carrier protein FLX1 (FLX1).